A 155-amino-acid chain; its full sequence is Small ribosomal subunit protein uS7c (155 aa).

This sequence belongs to the universal ribosomal protein uS7 family. As to quaternary structure, part of the 30S ribosomal subunit.

It localises to the plastid. The protein resides in the chloroplast. Its function is as follows. One of the primary rRNA binding proteins, it binds directly to 16S rRNA where it nucleates assembly of the head domain of the 30S subunit. The sequence is that of Small ribosomal subunit protein uS7c (rps7) from Marchantia polymorpha (Common liverwort).